Here is a 158-residue protein sequence, read N- to C-terminus: Urease subunit beta (158 aa).

A disordered region spans residues Glu113–Asn158. The segment covering Ala134–Glu143 has biased composition (basic and acidic residues). Positions Ala144 to Asn158 are enriched in acidic residues.

The protein belongs to the urease beta subunit family. As to quaternary structure, heterotrimer of UreA (gamma), UreB (beta) and UreC (alpha) subunits. Three heterotrimers associate to form the active enzyme.

It localises to the cytoplasm. It carries out the reaction urea + 2 H2O + H(+) = hydrogencarbonate + 2 NH4(+). It participates in nitrogen metabolism; urea degradation; CO(2) and NH(3) from urea (urease route): step 1/1. The sequence is that of Urease subunit beta from Corynebacterium glutamicum (strain R).